Here is a 488-residue protein sequence, read N- to C-terminus: Nitrogen metabolite repression protein nmr (488 aa).

The segment at M1 to M45 is disordered. The span at A14–R29 shows a compositional bias: basic and acidic residues. The segment covering S36–M45 has biased composition (polar residues). NADP(+) is bound by residues N71–Q76, N165, K215, and Y237–N240. NAD(+) is bound by residues R75 to Q76, N165 to T167, K215, and Y237 to N240. The dispensable for NMR function stretch occupies residues E412 to A488. The tract at residues I422–A488 is disordered. The span at H438 to D459 shows a compositional bias: low complexity. Over residues S460–G473 the composition is skewed to acidic residues.

It belongs to the NmrA-type oxidoreductase family. As to quaternary structure, interacts with nit-2.

It localises to the nucleus. Its function is as follows. May be a redox sensor protein. Negative transcriptional regulator involved in the post-transcriptional modulation of the GATA-type transcription factor nit-2, forming part of a system controlling nitrogen metabolite repression. This is Nitrogen metabolite repression protein nmr (nmr) from Neurospora crassa (strain ATCC 24698 / 74-OR23-1A / CBS 708.71 / DSM 1257 / FGSC 987).